A 351-amino-acid chain; its full sequence is C(7)-cyclitol 7-kinase (351 aa).

Belongs to the ROK (NagC/XylR) family.

It carries out the reaction valienone + ATP = valienone 7-phosphate + ADP + H(+). The enzyme catalyses validone + ATP = validone 7-phosphate + ADP + H(+). In terms of biological role, involved in the biosynthesis of the antifungal agent validamycin A. Catalyzes the phosphorylation of valienone and validone to their 7-phosphate derivatives. The sequence is that of C(7)-cyclitol 7-kinase from Streptomyces hygroscopicus subsp. jinggangensis (strain 5008).